A 467-amino-acid polypeptide reads, in one-letter code: ADP-dependent glucose/glucosamine kinase (467 aa).

An ADPK domain is found at 10–467 (RLWKRLYVNA…FVSEFGMRKR (458 aa)). D-glucose is bound by residues aspartate 42, glutamate 96, glycine 120, 120–121 (GQ), histidine 184, and aspartate 211. Mg(2+) is bound at residue glutamate 279. ADP is bound at residue asparagine 305. A Mg(2+)-binding site is contributed by glutamate 308. Residues 352-353 (HT), valine 440, and glycine 450 contribute to the ADP site. Aspartate 451 serves as a coordination point for D-glucose. A Mg(2+)-binding site is contributed by aspartate 451. The active-site Proton acceptor is aspartate 451.

Belongs to the ADP-dependent glucokinase family. As to quaternary structure, monomer. It depends on Mg(2+) as a cofactor.

It localises to the cytoplasm. It catalyses the reaction D-glucose + ADP = D-glucose 6-phosphate + AMP + H(+). The catalysed reaction is D-glucosamine + ADP = D-glucosamine 6-phosphate + AMP + H(+). It participates in carbohydrate degradation; glycolysis. In terms of biological role, catalyzes the ADP-dependent phosphorylation of D-glucose to D-glucose 6-phosphate and glucosamine to glucosamine 6-phosphate. Can also use CDP as the phosphoryl group donor and D-1,5-anhydroglucitol as the phosphoryl group acceptor. The protein is ADP-dependent glucose/glucosamine kinase of Thermococcus litoralis (strain ATCC 51850 / DSM 5473 / JCM 8560 / NS-C).